Reading from the N-terminus, the 469-residue chain is Probable NADPH:adrenodoxin oxidoreductase, mitochondrial (469 aa).

The transit peptide at Met-1–Asn-38 directs the protein to the mitochondrion. Residues Ala-27, Glu-48, Leu-56, and Val-92 each contribute to the FAD site. Residues His-164–Val-167, Arg-208–Arg-209, and Glu-220 contribute to the NADP(+) site. FAD contacts are provided by residues Trp-375 and Gly-382–Ile-384. Gly-382 is a binding site for NADP(+).

It belongs to the ferredoxin--NADP reductase type 1 family. FAD serves as cofactor.

Its subcellular location is the mitochondrion inner membrane. The catalysed reaction is 2 reduced [adrenodoxin] + NADP(+) + H(+) = 2 oxidized [adrenodoxin] + NADPH. Functionally, adrenodoxin reductase transfers electrons from NADPH to adrenodoxin, which is involved in heme A biosynthesis and in iron-sulfur cluster assembly. Involved in the electron transfer to heme A synthase etp1(cd), a heme protein that catalyzes the conversion of heme O to heme A. Required for the de novo synthesis of Fe-S clusters on iron sulfur cluster assembly protein isu1. Involved in electron delivery for Fe-S cluster synthesis. Essential for coenzyme Q biosynthesis. May be involved in the electron transfer required for the hydroxylation reaction performed by coq6. May play a role in cellular and mitochondrial iron homeostasis. In Schizosaccharomyces pombe (strain 972 / ATCC 24843) (Fission yeast), this protein is Probable NADPH:adrenodoxin oxidoreductase, mitochondrial (arh1).